Reading from the N-terminus, the 296-residue chain is Formamidopyrimidine-DNA glycosylase (296 aa).

P2 acts as the Schiff-base intermediate with DNA in catalysis. The Proton donor role is filled by E3. The active-site Proton donor; for beta-elimination activity is K61. Residues H95, R122, and K169 each contribute to the DNA site. An FPG-type zinc finger spans residues 255–289 (NAYGRNDQPCARCGTPIQRETFMNRSSYSCPRCQP). R279 serves as the catalytic Proton donor; for delta-elimination activity.

The protein belongs to the FPG family. In terms of assembly, monomer. Zn(2+) serves as cofactor.

It catalyses the reaction Hydrolysis of DNA containing ring-opened 7-methylguanine residues, releasing 2,6-diamino-4-hydroxy-5-(N-methyl)formamidopyrimidine.. It carries out the reaction 2'-deoxyribonucleotide-(2'-deoxyribose 5'-phosphate)-2'-deoxyribonucleotide-DNA = a 3'-end 2'-deoxyribonucleotide-(2,3-dehydro-2,3-deoxyribose 5'-phosphate)-DNA + a 5'-end 5'-phospho-2'-deoxyribonucleoside-DNA + H(+). Involved in base excision repair of DNA damaged by oxidation or by mutagenic agents. Acts as a DNA glycosylase that recognizes and removes damaged bases. Has a preference for oxidized purines, such as 7,8-dihydro-8-oxoguanine (8-oxoG). Has AP (apurinic/apyrimidinic) lyase activity and introduces nicks in the DNA strand. Cleaves the DNA backbone by beta-delta elimination to generate a single-strand break at the site of the removed base with both 3'- and 5'-phosphates. The polypeptide is Formamidopyrimidine-DNA glycosylase (Thermobifida fusca (strain YX)).